A 459-amino-acid chain; its full sequence is Lipase 4 (459 aa).

The signal sequence occupies residues 1–14 (MLFLLFLLVAPIYA). C110 and C281 are joined by a disulfide. The active-site Charge relay system is the S194. Residues N229 and N266 are each glycosylated (N-linked (GlcNAc...) asparagine). Active-site charge relay system residues include D343 and H376. Residues C359 and C404 are joined by a disulfide bond.

The protein belongs to the AB hydrolase superfamily. Lipase family. Class Lip subfamily.

The protein localises to the secreted. The catalysed reaction is a triacylglycerol + H2O = a diacylglycerol + a fatty acid + H(+). Its function is as follows. Secreted lipase that is able to hydrolyze both the neutral triacylglycerols and the monopalmitate ester Tween 40, allowing the use of hydrolyzed products as carbon sources. Has broad lipolytic activity, which may be important for colonization and subsequent infection, therefore contributing to the persistence and virulence in human tissue. This is Lipase 4 from Candida albicans (strain SC5314 / ATCC MYA-2876) (Yeast).